The following is a 92-amino-acid chain: MKLLLAIALMLTTVMWASTQQPQTVHTYCGHHLARTLADLCWEAGVDKRSDAQFASYGSAWLMPYSEGRDQRGIVDECCLRPCSVDVLLSYC.

Residues 1–19 form the signal peptide; that stretch reads MKLLLAIALMLTTVMWAST. At glutamine 20 the chain carries Pyrrolidone carboxylic acid. Intrachain disulfides connect cysteine 29-cysteine 79, cysteine 41-cysteine 92, and cysteine 78-cysteine 83. Positions 50 to 71 are cleaved as a propeptide — c peptide like; that stretch reads SDAQFASYGSAWLMPYSEGRDQ.

It belongs to the insulin family. As to quaternary structure, heterodimer of a B chain and an A chain linked by two disulfide bonds.

The protein resides in the secreted. Brain peptide responsible for activation of prothoracic glands to produce ecdysone in insects. This Bombyx mori (Silk moth) protein is Bombyxin A-5 (BBXA5).